Here is a 563-residue protein sequence, read N- to C-terminus: Coiled-coil domain-containing protein 38 (563 aa).

Coiled-coil stretches lie at residues 129-212 (KRNT…KTEF), 384-415 (NIEF…RSRL), and 485-522 (ERMK…AVAQ). Residues 521 to 550 (AQPKKKLGRRLVYHSKPPSANKQQLPLVNE) form a disordered region. Over residues 523-533 (PKKKLGRRLVY) the composition is skewed to basic residues.

In terms of assembly, interacts with CCDC42, CFAP53, IFT88 and ODF2. Interacts with CCDC146. Interacts with TEKT3. Interacts with ubiquitinated histone H2A.

Its subcellular location is the cytoplasm. It localises to the cytoskeleton. It is found in the microtubule organizing center. The protein localises to the centrosome. The protein resides in the perinuclear region. Its subcellular location is the cell projection. It localises to the cilium. It is found in the flagellum. Its function is as follows. Essential for male fertility. Required for sperm flagellum biogenesis. Also required for acrosome biogenesis. Required for the attachment of developing acrosomes to the nucleus during spermiogenesis and may be involved in the transport of fibrous sheath components. This chain is Coiled-coil domain-containing protein 38 (CCDC38), found in Macaca fascicularis (Crab-eating macaque).